Consider the following 204-residue polypeptide: MTTPHHGPLRVGIGGPVGSGKTALMEGLCKALRGRFDLCAITNDIYTKEDARLLTVAGALPEERIMGVETGGCPHTAIREDASINLAAVAEMRRRFPSLDLILIESGGDNLAATFSPELADLTLYVIDVAGGEKIPRKGGPGITRSDLLVINKTDLAPLVGADLAVMEADTQRMRGGRPYVFTSLRRGDGVEAVARFVIEAGGL.

GTP is bound at residue glycine 15–threonine 22.

This sequence belongs to the SIMIBI class G3E GTPase family. UreG subfamily. In terms of assembly, homodimer. UreD, UreF and UreG form a complex that acts as a GTP-hydrolysis-dependent molecular chaperone, activating the urease apoprotein by helping to assemble the nickel containing metallocenter of UreC. The UreE protein probably delivers the nickel.

It localises to the cytoplasm. In terms of biological role, facilitates the functional incorporation of the urease nickel metallocenter. This process requires GTP hydrolysis, probably effectuated by UreG. The polypeptide is Urease accessory protein UreG (Methylobacterium sp. (strain 4-46)).